We begin with the raw amino-acid sequence, 225 residues long: Ribulose-phosphate 3-epimerase (225 aa).

Position 10 (Ser-10) interacts with substrate. Residues His-35, Asp-37, and His-68 each contribute to the a divalent metal cation site. Asp-37 serves as the catalytic Proton acceptor. Residues His-68, 144 to 147, and 175 to 177 each bind substrate; these read GFGG and DGG. Asp-175 serves as a coordination point for a divalent metal cation. Asp-175 serves as the catalytic Proton donor.

Belongs to the ribulose-phosphate 3-epimerase family. A divalent metal cation is required as a cofactor.

It carries out the reaction D-ribulose 5-phosphate = D-xylulose 5-phosphate. It functions in the pathway carbohydrate degradation. Its function is as follows. Catalyzes the reversible epimerization of D-ribulose 5-phosphate to D-xylulose 5-phosphate. This Rhodospirillum rubrum protein is Ribulose-phosphate 3-epimerase.